The following is a 260-amino-acid chain: Indole-3-glycerol phosphate synthase (260 aa).

This sequence belongs to the TrpC family.

It carries out the reaction 1-(2-carboxyphenylamino)-1-deoxy-D-ribulose 5-phosphate + H(+) = (1S,2R)-1-C-(indol-3-yl)glycerol 3-phosphate + CO2 + H2O. The protein operates within amino-acid biosynthesis; L-tryptophan biosynthesis; L-tryptophan from chorismate: step 4/5. This is Indole-3-glycerol phosphate synthase from Leifsonia xyli subsp. xyli (strain CTCB07).